We begin with the raw amino-acid sequence, 152 residues long: MEYGNLRRQAASLKKSLFDQGYLDEQFCQVEDLQDEANPNFAEEVVSLFFKDSTRVMLNFEQAIEKHPKDFARWDTHMQQLKGSCSSIGASRVKNECTSFRNFCGEENAEGCTRSFQKVKREHAVLRQKWESYFQLLRQAGPAGTATRPAGK.

Positions 38–140 (NPNFAEEVVS…ESYFQLLRQA (103 aa)) constitute an HPt domain.

Functionally, functions as a two-component phosphorelay mediator between cytokinin sensor histidine kinases and response regulators (B-type ARRs). Plays an important role in propagating cytokinin signal transduction. The polypeptide is Pseudo histidine-containing phosphotransfer protein 5 (Oryza sativa subsp. japonica (Rice)).